A 1381-amino-acid polypeptide reads, in one-letter code: Contactin-associated protein 1 (1381 aa).

The N-terminal stretch at 1–20 (MMSLRLFSILLAAVVSGAQG) is a signal peptide. Topologically, residues 21–1284 (WGYYGCNEEL…PYYHDDGWIA (1264 aa)) are extracellular. Positions 26–169 (CNEELVGPLY…IGLRLGIYGC (144 aa)) constitute an F5/8 type C domain. Cys26 and Cys169 are disulfide-bonded. N-linked (GlcNAc...) asparagine glycans are attached at residues Asn121, Asn129, and Asn277. 2 Laminin G-like domains span residues 204–356 (FKTE…AFRC) and 390–539 (FRTW…FDTC). A disulfide bridge connects residues Cys324 and Cys356. 3 N-linked (GlcNAc...) asparagine glycosylation sites follow: Asn421, Asn500, and Asn519. Intrachain disulfides connect Cys507–Cys539, Cys545–Cys556, Cys550–Cys565, and Cys567–Cys577. The 33-residue stretch at 544-576 (RCSPNMCEHDGRCYQSWDDFICYCELTGYKGVT) folds into the EGF-like 1 domain. In terms of domain architecture, Fibrinogen C-terminal spans 577–796 (CHEPLYKESC…NTISFRTGAA (220 aa)). Residues Asn598, Asn654, Asn665, Asn764, Asn805, Asn844, Asn861, Asn949, and Asn957 are each glycosylated (N-linked (GlcNAc...) asparagine). Residues 814-958 (FRTSAPSGVF…NASEGTFPNC (145 aa)) form the Laminin G-like 3 domain. Cystine bridges form between Cys931–Cys958, Cys962–Cys975, Cys969–Cys984, and Cys986–Cys996. The 35-residue stretch at 962-996 (CTHPRFPCFHGGRCVERYSYYTCDCDLTAFDGPYC) folds into the EGF-like 2 domain. Residues Asn1079 and Asn1148 are each glycosylated (N-linked (GlcNAc...) asparagine). The region spanning 1089-1251 (FSTSSAPAVL…VQGELSESNC (163 aa)) is the Laminin G-like 4 domain. A disulfide bridge links Cys1210 with Cys1251. A helical membrane pass occupies residues 1285–1305 (ILLGFLVAFLLLGLVGMLVLF). The Cytoplasmic portion of the chain corresponds to 1306–1381 (YLQNHRYKGS…PQILEESRSE (76 aa)). Residues 1317-1381 (HTNEPKATHD…PQILEESRSE (65 aa)) are disordered. The segment covering 1319–1329 (NEPKATHDSHP) has biased composition (basic and acidic residues). An SH3-binding motif is present at residues 1329–1366 (PGGKAPLPPSGPAQAPAPTPAPTQVPTPAPAPASGPGP). Pro residues predominate over residues 1334-1363 (PLPPSGPAQAPAPTPAPTQVPTPAPAPASG). Phosphoserine is present on Ser1380.

The protein belongs to the neurexin family. Interacts with CNTN1/contactin in cis form. In terms of tissue distribution, predominantly expressed in brain. In myelinated nerve fibers of the CNS predominantly found in paranodal axoglial junctions. In unmyelinated nerve fibers of the CNS diffusely distributed along the entire surface. Weak expression is detected in ovary, pancreas, colon, lung, heart, intestine and testis.

The protein resides in the membrane. It is found in the cell junction. The protein localises to the paranodal septate junction. Its function is as follows. Required, with CNTNAP2, for radial and longitudinal organization of myelinated axons. Plays a role in the formation of functional distinct domains critical for saltatory conduction of nerve impulses in myelinated nerve fibers. Demarcates the paranodal region of the axo-glial junction. In association with contactin involved in the signaling between axons and myelinating glial cells. This Rattus norvegicus (Rat) protein is Contactin-associated protein 1 (Cntnap1).